The sequence spans 454 residues: Zeatin O-xylosyltransferase (454 aa).

It belongs to the UDP-glycosyltransferase family. As to expression, high level in young seeds, less in older seeds and very low in roots.

It carries out the reaction zeatin + UDP-alpha-D-xylose = O-beta-D-xylosylzeatin + UDP + H(+). Utilizes UDP-xylose as the sugar donor and catalyzes the formation of o-xylosylzeatin from zeatin. Does not act on UDP-glucose. This is Zeatin O-xylosyltransferase from Phaseolus vulgaris (Kidney bean).